Here is a 73-residue protein sequence, read N- to C-terminus: Sec-independent protein translocase protein TatA (73 aa).

The helical transmembrane segment at 1–21 threads the bilayer; it reads MGSFSIWHWVIVLVVVVLIFG. Residues 43–73 are disordered; the sequence is MKSEGEDAAQTPPAAQKEGGRVIDAEPADKK. Over residues 60–73 the composition is skewed to basic and acidic residues; that stretch reads EGGRVIDAEPADKK.

The protein belongs to the TatA/E family. The Tat system comprises two distinct complexes: a TatABC complex, containing multiple copies of TatA, TatB and TatC subunits, and a separate TatA complex, containing only TatA subunits. Substrates initially bind to the TatABC complex, which probably triggers association of the separate TatA complex to form the active translocon.

It is found in the cell inner membrane. Part of the twin-arginine translocation (Tat) system that transports large folded proteins containing a characteristic twin-arginine motif in their signal peptide across membranes. TatA could form the protein-conducting channel of the Tat system. The chain is Sec-independent protein translocase protein TatA from Laribacter hongkongensis (strain HLHK9).